We begin with the raw amino-acid sequence, 260 residues long: Carbonic anhydrase 3 (260 aa).

Residue Ala2 is modified to N-acetylalanine. The 257-residue stretch at 3-259 (KEWGYADHNG…LKGRVVRASF (257 aa)) folds into the Alpha-carbonic anhydrase domain. Ser29, Ser43, Ser50, and Ser55 each carry phosphoserine. Residues 64–67 (RTCR) are involved in proton transfer. Phosphothreonine is present on Thr73. The Zn(2+) site is built by His94, His96, and His119. A Phosphotyrosine modification is found at Tyr127. A phosphothreonine mark is found at Thr129 and Thr176. Cys182 and Cys187 each carry S-glutathionyl cysteine. 198-199 (TT) provides a ligand contact to substrate. Thr216 is modified (phosphothreonine). At Ser219 the chain carries Phosphoserine.

This sequence belongs to the alpha-carbonic anhydrase family. The cofactor is Zn(2+). Post-translationally, S-thiolated both by thiol-disulfide exchange with glutathione disulfide and by oxyradical-initiated S-thiolation with reduced glutathione. In terms of processing, S-glutathionylated in hepatocytes under oxidative stress.

Its subcellular location is the cytoplasm. It catalyses the reaction hydrogencarbonate + H(+) = CO2 + H2O. Its activity is regulated as follows. Inhibited by acetazolamide. In terms of biological role, reversible hydration of carbon dioxide. This is Carbonic anhydrase 3 (CA3) from Equus caballus (Horse).